The primary structure comprises 421 residues: Solute carrier family 35 member F3 (421 aa).

The segment at Glu-25–Arg-53 is disordered. The segment covering Ala-37 to Gly-49 has biased composition (low complexity). 10 helical membrane-spanning segments follow: residues Val-66–Leu-86, Phe-98–Gly-118, Val-149–Leu-169, Asp-179–Leu-199, Ile-208–His-228, Val-232–Phe-252, Leu-266–Leu-286, Leu-305–Val-325, Thr-326–Asp-346, and Ile-352–Leu-372. Residues Lys-394–Arg-421 form a disordered region. A compositionally biased stretch (basic residues) spans Arg-411–Arg-421.

This sequence belongs to the SLC35F solute transporter family.

Its subcellular location is the membrane. It carries out the reaction thiamine(in) = thiamine(out). Functionally, mediates thiamine transport. In Mus musculus (Mouse), this protein is Solute carrier family 35 member F3 (Slc35f3).